We begin with the raw amino-acid sequence, 390 residues long: Queuine tRNA-ribosyltransferase (390 aa).

The Proton acceptor role is filled by Asp92. Substrate contacts are provided by residues 92-96, Asp146, Gln195, and Gly222; that span reads DSGGF. The interval 253–259 is RNA binding; sequence GVGTPED. The active-site Nucleophile is Asp272. Residues 277-281 form an RNA binding; important for wobble base 34 recognition region; that stretch reads TRNAR. Positions 310, 312, 315, and 354 each coordinate Zn(2+).

Belongs to the queuine tRNA-ribosyltransferase family. As to quaternary structure, homodimer. Within each dimer, one monomer is responsible for RNA recognition and catalysis, while the other monomer binds to the replacement base PreQ1. The cofactor is Zn(2+).

The enzyme catalyses 7-aminomethyl-7-carbaguanine + guanosine(34) in tRNA = 7-aminomethyl-7-carbaguanosine(34) in tRNA + guanine. It participates in tRNA modification; tRNA-queuosine biosynthesis. Catalyzes the base-exchange of a guanine (G) residue with the queuine precursor 7-aminomethyl-7-deazaguanine (PreQ1) at position 34 (anticodon wobble position) in tRNAs with GU(N) anticodons (tRNA-Asp, -Asn, -His and -Tyr). Catalysis occurs through a double-displacement mechanism. The nucleophile active site attacks the C1' of nucleotide 34 to detach the guanine base from the RNA, forming a covalent enzyme-RNA intermediate. The proton acceptor active site deprotonates the incoming PreQ1, allowing a nucleophilic attack on the C1' of the ribose to form the product. After dissociation, two additional enzymatic reactions on the tRNA convert PreQ1 to queuine (Q), resulting in the hypermodified nucleoside queuosine (7-(((4,5-cis-dihydroxy-2-cyclopenten-1-yl)amino)methyl)-7-deazaguanosine). This is Queuine tRNA-ribosyltransferase from Acidovorax ebreus (strain TPSY) (Diaphorobacter sp. (strain TPSY)).